The primary structure comprises 287 residues: Ret finger protein-like 4A (287 aa).

The segment at C11–S53 adopts an RING-type; degenerate zinc-finger fold. The 201-residue stretch at E78–G278 folds into the B30.2/SPRY domain.

In terms of assembly, interacts with PSMB1, UBE2A and CCNB1. Expressed in the ovaries and oocytes (at protein level). Expression restricted to gonads. In testis, present at later stages of spermatogeneis and abundant in elongating spermatids.

It localises to the cytoplasm. The protein resides in the nucleus. The chain is Ret finger protein-like 4A (Rfpl4a) from Mus musculus (Mouse).